Reading from the N-terminus, the 234-residue chain is MEFSPPLQLATLIQRYKRFLADVITPDGRELTLHCPNTGAMTGCATPGDTVWYSTSDNTKRKYPHTWELTQSQSGAFICVNTLWANRLTKEAILNESISELSGYSSLKSEVKYGAERSRIDFMLQADSRPDCYIEVKSVTLAENEQGYFPDAVTERGQKHLRELMSVAAEGQRAVIFFAVLHSAITRFSPARHIDEKYAQLLSEAQQRGVEILAYKAEISAEGMALKKSLPVTL.

Residues 201–220 (LLSEAQQRGVEILAYKAEIS) constitute a DNA-binding region (H-T-H motif).

It belongs to the SfsA family.

Its function is as follows. Binds to DNA non-specifically. Could be a regulatory factor involved in maltose metabolism. This is Sugar fermentation stimulation protein A from Shigella dysenteriae serotype 1 (strain Sd197).